Reading from the N-terminus, the 351-residue chain is Dihydroorotate dehydrogenase (quinone) (351 aa).

Residues 67–71 (AGFDK) and threonine 91 contribute to the FMN site. Lysine 71 serves as a coordination point for substrate. 116–120 (NAMGF) provides a ligand contact to substrate. FMN-binding residues include asparagine 145 and asparagine 178. Asparagine 178 lines the substrate pocket. Catalysis depends on serine 181, which acts as the Nucleophile. Asparagine 183 provides a ligand contact to substrate. Lysine 214 and threonine 242 together coordinate FMN. 243–244 (NT) contacts substrate. FMN is bound by residues glycine 262, glycine 291, and 312–313 (YS).

It belongs to the dihydroorotate dehydrogenase family. Type 2 subfamily. As to quaternary structure, monomer. It depends on FMN as a cofactor.

The protein localises to the cell membrane. The catalysed reaction is (S)-dihydroorotate + a quinone = orotate + a quinol. It participates in pyrimidine metabolism; UMP biosynthesis via de novo pathway; orotate from (S)-dihydroorotate (quinone route): step 1/1. Its function is as follows. Catalyzes the conversion of dihydroorotate to orotate with quinone as electron acceptor. The chain is Dihydroorotate dehydrogenase (quinone) from Helicobacter pylori (strain Shi470).